Here is a 474-residue protein sequence, read N- to C-terminus: Sensor protein CreC (474 aa).

Topologically, residues 1 to 6 are periplasmic; sequence MRIGMR. The helical transmembrane segment at 7–27 threads the bilayer; the sequence is LLLGYFLLVAVAAWFVLAIFV. At 28 to 146 the chain is on the cytoplasmic side; that stretch reads KEVKPGVRRA…LQNPADPESS (119 aa). The helical transmembrane segment at 147-167 threads the bilayer; it reads VMYVAAPIMDGSRLIGVLSVG. Residues 168–183 lie on the Periplasmic side of the membrane; that stretch reads KPNAAMAPVIKRSERR. The chain crosses the membrane as a helical span at residues 184–204; the sequence is ILWASAILLGIALVIGAGMVW. One can recognise an HAMP domain in the interval 205-255; that stretch reads WINRSIARLTRYADSVTDNKPVPLPDLGSSELRKLAQALESMRVKLEGKNY. At 205 to 474 the chain is on the cytoplasmic side; the sequence is WINRSIARLT…ASLRLHRHFT (270 aa). The Histidine kinase domain occupies 262–473; the sequence is ALTHELKSPL…LASLRLHRHF (212 aa). His-265 is subject to Phosphohistidine; by autocatalysis.

In terms of processing, autophosphorylated.

It localises to the cell inner membrane. It carries out the reaction ATP + protein L-histidine = ADP + protein N-phospho-L-histidine.. Member of the two-component regulatory system CreC/CreB involved in catabolic regulation. CreC may function as a membrane-associated protein kinase that phosphorylates CreB in response to environmental signals. CreC can also phosphorylate PhoB. The protein is Sensor protein CreC (creC) of Escherichia coli (strain K12).